A 215-amino-acid polypeptide reads, in one-letter code: FGFR1 oncogene partner 2 homolog (215 aa).

Positions 35–183 (LLNKRVEAMK…SGLRELLGIS (149 aa)) form a coiled coil.

Belongs to the SIKE family.

Its subcellular location is the cytoplasm. This is FGFR1 oncogene partner 2 homolog (fgfr1op2) from Danio rerio (Zebrafish).